A 307-amino-acid polypeptide reads, in one-letter code: Estrogen receptor (307 aa).

The nuclear receptor DNA-binding region spans 1–43 (GHNDYMCPATNQCTIDKNRRKSCQACRLRKCYEVGMMKGGIRK). An NR C4-type zinc finger spans residues 7–31 (CPATNQCTIDKNRRKSCQACRLRKC). Residues 44-95 (DRRGGRILKHKRQREEHDNRNAGAIVERRSPNLWPSPLMITHNKKNSPALSL) form a hinge region. Residues 96–307 (TADQIVSALL…HFRHMSNKGM (212 aa)) enclose the NR LBD domain.

This sequence belongs to the nuclear hormone receptor family. NR3 subfamily. Binds DNA as a homodimer. Can form a heterodimer with ER-beta.

The protein resides in the nucleus. Functionally, the steroid hormones and their receptors are involved in the regulation of eukaryotic gene expression and affect cellular proliferation and differentiation in target tissues. This Aspidoscelis uniparens (Desert grassland whiptail lizard) protein is Estrogen receptor (ESR1).